We begin with the raw amino-acid sequence, 208 residues long: Cysteine-rich protein 2 (208 aa).

The region spanning 5-57 (CPKCDKTVYFAEKVSSLGKDWHRFCLRCEHCSKTLTPGGHAEHDGKPFCHKPC) is the LIM zinc-binding 1 domain. Lys23 carries the post-translational modification N6-acetyllysine. The segment at 98 to 117 (TEERKASGPPKGPSKASSVT) is disordered. Ser104 carries the post-translational modification Phosphoserine. Residues 104-115 (SGPPKGPSKASS) show a composition bias toward low complexity. Positions 126 to 178 (CPRCNKRVYFAEKVTSLGKDWHRPCLRCERCGKTLTPGGHAEHDGQPYCHKPC) constitute an LIM zinc-binding 2 domain. Residues Lys138 and Lys144 each carry the N6-acetyllysine modification.

In terms of assembly, interacts with TGFB1I1.

In Bos taurus (Bovine), this protein is Cysteine-rich protein 2 (CRIP2).